Consider the following 447-residue polypeptide: MIKIYDTMTRSLRDFVPLTENTVNMYVCGPTVYNYIHIGNARSTVAFDTIRRYFEYRGYTVNYISNFTDVDDKIIKAANEVGISTKELSDKFITAFMEDTAQLGIKPATQNPRVINYMDEIIAFVSILIDKGFAYVSEGDVYFRVTKSNNYAKLANKTLEDLEIGASGRTDAETDRKEDPLDFALWKAAKEGEISWESPWGPGRPGWHIECSVMATEILGDTIDIHGGGADLEFPHHTNEIAQSEAKTGKTFANYWMHNGFVNVDNEKMSKSLGNFVTVHDMLKTVDGQVLRFFLATQQYRKPINFTEKAIHDAEVNLKYLKNTHSLPLTEEVSQAELQAYLDAFQAAMDDDFNTANGVTVLFDMAKWINSGNYDETVKDAFEKILQVFGIVFEEETLDEDIEKLIEERQAARANKDFATADRIRDELAAQGIKLLDTKEGVRWTRD.

Cys-28 is a Zn(2+) binding site. Residues 30–40 (PTVYNYIHIGN) carry the 'HIGH' region motif. Zn(2+)-binding residues include Cys-211, His-236, and Glu-240. The short motif at 268-272 (KMSKS) is the 'KMSKS' region element. Lys-271 lines the ATP pocket.

This sequence belongs to the class-I aminoacyl-tRNA synthetase family. As to quaternary structure, monomer. Zn(2+) serves as cofactor.

Its subcellular location is the cytoplasm. It catalyses the reaction tRNA(Cys) + L-cysteine + ATP = L-cysteinyl-tRNA(Cys) + AMP + diphosphate. This Streptococcus thermophilus (strain CNRZ 1066) protein is Cysteine--tRNA ligase.